Here is a 433-residue protein sequence, read N- to C-terminus: Glutamate--tRNA ligase 1 (433 aa).

The 'HIGH' region motif lies at Pro-7–Asn-17. The short motif at Lys-230–Arg-234 is the 'KMSKS' region element. Lys-233 is a binding site for ATP.

It belongs to the class-I aminoacyl-tRNA synthetase family. Glutamate--tRNA ligase type 1 subfamily. In terms of assembly, monomer.

Its subcellular location is the cytoplasm. It catalyses the reaction tRNA(Glu) + L-glutamate + ATP = L-glutamyl-tRNA(Glu) + AMP + diphosphate. In terms of biological role, catalyzes the attachment of glutamate to tRNA(Glu) in a two-step reaction: glutamate is first activated by ATP to form Glu-AMP and then transferred to the acceptor end of tRNA(Glu). In Neorickettsia sennetsu (strain ATCC VR-367 / Miyayama) (Ehrlichia sennetsu), this protein is Glutamate--tRNA ligase 1.